Here is a 1774-residue protein sequence, read N- to C-terminus: MSSLRDQLAQVAQNNATVALDRKRRQKLHSASLVYNPKTAATQDYEYIYDTALESFHTLVSLDLRFKVFTNSLFSASSVTIDRNVQTKDQIRDLDNAVNAYLMLISPKWHLTPALHATEWLIRRFQIHIHNAEMLLLSTLNQYQTPVFKRILNIVKLPPLFNPFTNFVRNDKNPTDLTLIKLFNDMDFLKLYSNYLSKIIKQKVTYTNQLLFTTCCFINVIAFNANDEDKLNKLVPLILEISAKLLASDSSDCQMAAHTMLAVLATALPLNKSIIIAATETILANLKEDDARKKALVTISKLFQTLKGVGNVDQLPVKIYKLVDNSFPFEYLLQFLSNENKYSSDKFFTAYIRSVIRYDHDKLSQIVKILRKIKLEKYEVRFIITDLIHLSEVLEDKSQLIDVFEYFISINEGLVLKCLQALNLTGEVFEIRLTTSLFSVKNSAEQSGEDIIKVLDDAKASTANGSAVPFKDFMTKNSEFISTKAESMLLVKDEKFVKLLSLFVEAVSKGYQPGLFLSSFFTTLESRITFVLRIIVSPGSPVALRLISLTQLSKFINGIDEQTDLFSLVPILVTALMDISRSVRSNTKKVLQQIAKRPFTAKYFLSNVLYGENLKVPMLSPKDSKFWLTNFLSDYIVESTDISSLVIPSKNDMVYMLFWCNQALHLPLAYSKTIMLKLLTAVPQYAFTYSKVFEQFMATYITERSSWETKCIKNKTNFKDFETAVCAIVAPKEKNSFAIDFLINCLESEYEQLSNIMADRILSLYPTLKFPNQLKIVQSIIDSSVDKELSYDGLETLQSLPLTADIFVSVLKSNTINSEDQTDLTKRRRRRSSTVNKSALQKQDISQIAEAHLKKMTIILETLDKLKVKSNENLLNALFNLLSDLETLDHDGGLPVLYAQETLSSCLLNTISSLKSNNGSMKLPSIRADILVAAIRSSTSPQMQNKLLLVVGALASVSPETILHSVMPIFTFMGAHTIRQDDEFSTLVVERTISTIVPALLKSTEVTNKSDEIEFLLMSFSTAFSHVPKHRRVSLYSTLVRELGPSDVIAPFLFLIAQQYSNCLEKFKIAESKNYIEFFKAFLSKFDILEQLHGFNELFNLVELLDEDSSKNEVAPTRTLFSNGIVNMSKSELFVLKKNDLDFIDKVIGESKSDYYNTSSNLKLRILSTLLDPNIEIEVKNQVRNEFSILLSKTLNAINMTDSLSYDKHSSAGSNDEEAGSESEAEVDQKELKDILFGLLEHVLDLLPIQDFVASILPLLQGNTDESVRHHLTVVTSNKFIEEPMESFETANEILSTLVETTEKASESTQILQVTLNTISSIVTRFGDRLDSHLLVKSMENSCKQLTSKKIELEISSLTVLTTLIQTLGVKTLAFYPKIVPVAISIFKTYQNAKNNLKEQLQLAIVLLFASMIKKIPSFLLSNLQDVFVILFHSDEVADSVRLSVISLIVEHIPLKDVFKTLQKVWTNDVSSSNNSVAVSLFLSMLESAVEAIDKKSATQQSPVFFRLLLNLFEYRSICTFDENSINRIEASVHQIANVYVLKLNDKVFRPLFALVVNWAFNGEGVTNTNMSKEERLMAFYKFYNKTQENLKSIITSYFTYLLEPTNNLLKQFISKETVNVSLRRLVLISLTSSFKYDRDEYWKSTSRFELISESLINQLTNVEDVIGKYLVKAIGSLATNNSGVDEHNKIMSDLMISHMKTSCKTREKFWAVRSMKLIYSKVGDGWLVLLPRLVPIIAELLEDEDEEVEYEVRSGLVKVVESVMGEPFDRYLS.

Residues 1206–1226 (YDKHSSAGSNDEEAGSESEAE) are disordered. Residues 1215-1226 (NDEEAGSESEAE) show a composition bias toward acidic residues. The HEAT repeat unit spans residues 1734 to 1772 (LVPIIAELLEDEDEEVEYEVRSGLVKVVESVMGEPFDRY).

Belongs to the HEATR1/UTP10 family. In terms of assembly, component of the ribosomal small subunit (SSU) processome.

It localises to the nucleus. The protein localises to the nucleolus. Involved in nucleolar processing of pre-18S ribosomal RNA. Involved in ribosome biosynthesis. The chain is U3 small nucleolar RNA-associated protein 10 from Kluyveromyces lactis (strain ATCC 8585 / CBS 2359 / DSM 70799 / NBRC 1267 / NRRL Y-1140 / WM37) (Yeast).